Here is a 397-residue protein sequence, read N- to C-terminus: Citrate synthase (397 aa).

Residues histidine 266 and aspartate 320 contribute to the active site.

It belongs to the citrate synthase family.

It catalyses the reaction oxaloacetate + acetyl-CoA + H2O = citrate + CoA + H(+). Its pathway is carbohydrate metabolism; tricarboxylic acid cycle; isocitrate from oxaloacetate: step 1/2. The chain is Citrate synthase (gltA) from Synechocystis sp. (strain ATCC 27184 / PCC 6803 / Kazusa).